The primary structure comprises 273 residues: ABC transporter glutamine-binding protein GlnH (273 aa).

A signal peptide spans 1-20 (MKKIFSLALISLFAVILLAA). A lipid anchor (N-palmitoyl cysteine) is attached at Cys21. Residue Cys21 is the site of S-diacylglycerol cysteine attachment.

It belongs to the bacterial solute-binding protein 3 family. As to quaternary structure, the complex is composed of two ATP-binding proteins (GlnQ), two transmembrane proteins (GlnM and GlnP) and a solute-binding protein (GlnH).

It is found in the cell membrane. Functionally, part of the ABC transporter complex GlnHMPQ involved in glutamine transport. The polypeptide is ABC transporter glutamine-binding protein GlnH (glnH) (Bacillus subtilis (strain 168)).